The primary structure comprises 34 residues: Tau-theraphotoxin-Pc1c (34 aa).

Disulfide bonds link Cys2-Cys16, Cys9-Cys21, and Cys15-Cys28. A Phenylalanine amide modification is found at Phe34.

This sequence belongs to the neurotoxin 10 (Hwtx-1) family. 62 (Vatx) subfamily. In terms of tissue distribution, expressed by the venom gland.

It localises to the secreted. Selectively activates mammalian TRPV1, or capsaicin receptor, a non-selective cation channel expressed by sensory neurons of the pain pathway. Is more potent than VaTx1 and VaTx2. Interacts with distinct regions of the channel than capsaicin, since it only acts on the extracellular face of the channel, and capsaicin binds to the cytosolic side. Also activates avian TRPV1, which is insensitive to capsaicin. In mice, elicits pain-related behaviors, such as licking and flinching of the affected limb. The paw of toxin-injected mice shows substantial edema. The chain is Tau-theraphotoxin-Pc1c from Psalmopoeus cambridgei (Trinidad chevron tarantula).